Consider the following 368-residue polypeptide: Protein tesmin/TSO1-like CXC 8 (368 aa).

The CRC domain maps to 64-185 (KHKGCRCKQS…KCINCKNVSE (122 aa)).

It belongs to the lin-54 family.

It localises to the nucleus. Functionally, plays a role in development of both male and female reproductive tissues. In Arabidopsis thaliana (Mouse-ear cress), this protein is Protein tesmin/TSO1-like CXC 8 (TCX8).